The primary structure comprises 388 residues: Flavin-dependent monooxygenase (388 aa).

Residues 26-27 and 45-48 each bind FAD; these read PV and YERD. R54 contacts NADPH. Positions 61, 117, and 139 each coordinate FAD. Substrate contacts are provided by Q192 and R213. FAD-binding positions include D311 and 321 to 324; that span reads GQGV.

Belongs to the aromatic-ring hydroxylase family. TetX subfamily. In terms of assembly, monomer. It depends on FAD as a cofactor.

It is found in the cytoplasm. It catalyses the reaction a tetracycline + NADPH + O2 + H(+) = an 11a-hydroxytetracycline + NADP(+) + H2O. It carries out the reaction tetracycline + NADPH + O2 + H(+) = 11a-hydroxytetracycline + NADP(+) + H2O. The catalysed reaction is tigecycline + NADPH + O2 + H(+) = 11a-hydroxytigecycline + NADP(+) + H2O. The enzyme catalyses oxytetracycline + NADPH + O2 + H(+) = 11a-hydroxy-oxytetracycline + NADP(+) + H2O. Its activity is regulated as follows. Anhydrotetracycline, a poor substrate, prevents tetracycline degradation in vitro. Functionally, an FAD-requiring monooxygenase active on tetracycline antibiotic derivatives, which leads to their inactivation. Hydroxylates carbon 11a of oxytetracycline and tigecycline. Acts on many tetracycline analogs (chlorotetracycline, demeclocycline, doxycycline, minocycline, oxytetracyclinee), probably by monooxygenization. Tigecycline, a new generation tetracycline antibiotic, is rendered less effective against E.coli by this monooxygenation, is much weaker at inhibiting translation in vitro and binds Mg(2+) considerably less well. Expression in E.coli BW25113 reduces its growth rate about 5%. The reaction probably proceeds by FAD reduction by NADPH and, second, hydroxylation of antibiotic in a ping-pong mechanism. Degrades chlortetracycline, probably by monooxygenation. Slowly oxidizes anhydrotetracycline, the final substrate in tetracycline biosynthesis. This is Flavin-dependent monooxygenase from Bacteroides thetaiotaomicron.